Here is a 635-residue protein sequence, read N- to C-terminus: Threonine--tRNA ligase (635 aa).

The region spanning 1–61 (MINISFPDGS…DNDCKLRILT (61 aa)) is the TGS domain. The catalytic stretch occupies residues 242-533 (DHRKLGRELD…LIEEYAGRFP (292 aa)). Zn(2+)-binding residues include cysteine 333, histidine 384, and histidine 510.

Belongs to the class-II aminoacyl-tRNA synthetase family. In terms of assembly, homodimer. Zn(2+) serves as cofactor.

The protein localises to the cytoplasm. The catalysed reaction is tRNA(Thr) + L-threonine + ATP = L-threonyl-tRNA(Thr) + AMP + diphosphate + H(+). Functionally, catalyzes the attachment of threonine to tRNA(Thr) in a two-step reaction: L-threonine is first activated by ATP to form Thr-AMP and then transferred to the acceptor end of tRNA(Thr). Also edits incorrectly charged L-seryl-tRNA(Thr). In Rickettsia conorii (strain ATCC VR-613 / Malish 7), this protein is Threonine--tRNA ligase.